The following is a 132-amino-acid chain: NADH-quinone oxidoreductase subunit A 2 (132 aa).

A run of 3 helical transmembrane segments spans residues 9-29 (AWAF…MLGL), 66-86 (LVAM…LWAV), and 93-113 (WAGF…LFYL).

It belongs to the complex I subunit 3 family. As to quaternary structure, NDH-1 is composed of 13 different subunits. Subunits NuoA, H, J, K, L, M, N constitute the membrane sector of the complex.

The protein resides in the cell inner membrane. It catalyses the reaction a quinone + NADH + 5 H(+)(in) = a quinol + NAD(+) + 4 H(+)(out). In terms of biological role, NDH-1 shuttles electrons from NADH, via FMN and iron-sulfur (Fe-S) centers, to quinones in the respiratory chain. The immediate electron acceptor for the enzyme in this species is believed to be ubiquinone. Couples the redox reaction to proton translocation (for every two electrons transferred, four hydrogen ions are translocated across the cytoplasmic membrane), and thus conserves the redox energy in a proton gradient. The sequence is that of NADH-quinone oxidoreductase subunit A 2 from Pseudomonas paraeruginosa (strain DSM 24068 / PA7) (Pseudomonas aeruginosa (strain PA7)).